Consider the following 499-residue polypeptide: Glycerol kinase (499 aa).

Thr12 contacts ADP. Thr12, Thr13, and Ser14 together coordinate ATP. Residue Thr12 participates in sn-glycerol 3-phosphate binding. An ADP-binding site is contributed by Arg16. The sn-glycerol 3-phosphate site is built by Arg82, Glu83, Tyr134, and Asp240. Positions 82, 83, 134, 240, and 241 each coordinate glycerol. Thr262 and Gly306 together coordinate ADP. Residues Thr262, Gly306, Gln310, and Gly412 each coordinate ATP. ADP-binding residues include Gly412 and Asn416.

Belongs to the FGGY kinase family.

It catalyses the reaction glycerol + ATP = sn-glycerol 3-phosphate + ADP + H(+). It functions in the pathway polyol metabolism; glycerol degradation via glycerol kinase pathway; sn-glycerol 3-phosphate from glycerol: step 1/1. Inhibited by fructose 1,6-bisphosphate (FBP). Key enzyme in the regulation of glycerol uptake and metabolism. Catalyzes the phosphorylation of glycerol to yield sn-glycerol 3-phosphate. The sequence is that of Glycerol kinase from Nocardia farcinica (strain IFM 10152).